The chain runs to 752 residues: Peptidyl-prolyl cis-trans isomerase G (752 aa).

Residues F11–E176 form the PPIase cyclophilin-type domain. Over residues K182–S193 the composition is skewed to basic residues. The segment at K182–G752 is disordered. Over residues S194–S214 the composition is skewed to low complexity. The segment covering R226 to K251 has biased composition (basic residues). A phosphoserine mark is found at S252, S254, S255, S257, and S288. Basic and acidic residues predominate over residues P290–C308. S313 is modified (phosphoserine). Over residues F327–S345 the composition is skewed to basic residues. Composition is skewed to basic and acidic residues over residues R346–R366 and R377–N447. A Phosphoserine modification is found at S354. T356 carries the phosphothreonine modification. S384 is subject to Phosphoserine. K390 participates in a covalent cross-link: Glycyl lysine isopeptide (Lys-Gly) (interchain with G-Cter in SUMO2). S395, S411, and S413 each carry phosphoserine. Residues K448 to S461 show a composition bias toward basic residues. Composition is skewed to basic and acidic residues over residues K462–K552 and R577–R598. Residues R599–D625 show a composition bias toward basic residues. Residues S626–I682 show a composition bias toward basic and acidic residues. Residues S685 and S688 each carry the phosphoserine modification. The segment covering S685–K705 has biased composition (polar residues). K691 participates in a covalent cross-link: Glycyl lysine isopeptide (Lys-Gly) (interchain with G-Cter in SUMO2). 3 positions are modified to phosphoserine: S694, S742, and S743. The span at N706–G752 shows a compositional bias: basic and acidic residues. T746 carries the post-translational modification Phosphothreonine. S751 carries the phosphoserine modification.

As to quaternary structure, interacts with CLK1, PNN and with the phosphorylated C-terminal domain of RNA polymerase II.

It localises to the nucleus matrix. The protein resides in the nucleus speckle. It carries out the reaction [protein]-peptidylproline (omega=180) = [protein]-peptidylproline (omega=0). With respect to regulation, inhibited by cyclosporin A (CsA). Functionally, PPIase that catalyzes the cis-trans isomerization of proline imidic peptide bonds in oligopeptides and may therefore assist protein folding. May be implicated in the folding, transport, and assembly of proteins. May play an important role in the regulation of pre-mRNA splicing. The sequence is that of Peptidyl-prolyl cis-trans isomerase G (Ppig) from Rattus norvegicus (Rat).